The chain runs to 251 residues: tRNA pseudouridine synthase A (251 aa).

Asp52 acts as the Nucleophile in catalysis. Tyr113 is a substrate binding site.

The protein belongs to the tRNA pseudouridine synthase TruA family. In terms of assembly, homodimer.

It carries out the reaction uridine(38/39/40) in tRNA = pseudouridine(38/39/40) in tRNA. Formation of pseudouridine at positions 38, 39 and 40 in the anticodon stem and loop of transfer RNAs. The protein is tRNA pseudouridine synthase A of Brucella abortus (strain 2308).